We begin with the raw amino-acid sequence, 596 residues long: MKHIRNFSIIAHIDHGKSTLSDRLIQECGGLTDREMAAQVLDSMDIERERGITIKAQSVTLDYLANDGETYQLNFIDTPGHVDFSYEVSRSLAACEGALLVVDAGQGVEAQTLANCYTALEMDMDVVPVLNKIDLPQADPDRVAEEIEDIVGIEATDAVRCSAKTGVGIKDVLEVIVAQIPPPEGDPEGPLQALIIDSWFDSYLGVVSLVRIKNGVLKKGDKFKVMSTGQNYNADRVGIFTPKQTDTTELKTGEVGFVIAGIKEIHGAPVGDTLTHSKHGAEKALAGFKKVKPQVYAGLFPISTDDYENFRDALNKLSLNDASLFFEPETSSALGFGFRIGFLGLLHMEIIQERLEREYNLELITTAPTVVYEIVQTNGETIYVDNPSDLPAINNIAEMREPIVETNILVPKEYLGNVITLCIEKRGVQTNLVYHGNQVALTYELPMAEVVMDFFDRLKSTSRGYASLEYNFIRFEPADMVRLDILINGDRVDALAMIIHKGLIRSKGLALVNKMKELIPRQMFDIAVQAAVGSQIIARSSIKAMRKDVTAKCYGGDVSRKKKLLNKQKEGKKRMKQVGNVEVPQEAFLAVLKLND.

The tr-type G domain occupies K2–E184. Residues D14 to T19 and N131 to D134 each bind GTP.

It belongs to the TRAFAC class translation factor GTPase superfamily. Classic translation factor GTPase family. LepA subfamily.

It localises to the cell inner membrane. It carries out the reaction GTP + H2O = GDP + phosphate + H(+). Functionally, required for accurate and efficient protein synthesis under certain stress conditions. May act as a fidelity factor of the translation reaction, by catalyzing a one-codon backward translocation of tRNAs on improperly translocated ribosomes. Back-translocation proceeds from a post-translocation (POST) complex to a pre-translocation (PRE) complex, thus giving elongation factor G a second chance to translocate the tRNAs correctly. Binds to ribosomes in a GTP-dependent manner. This Shewanella halifaxensis (strain HAW-EB4) protein is Elongation factor 4.